Reading from the N-terminus, the 700-residue chain is UvrABC system protein C (700 aa).

Positions 11-90 constitute a GIY-YIG domain; it reads TTPGVYLYKD…IKKHRPRYNI (80 aa). Positions 200-235 constitute a UVR domain; the sequence is TELIDMLRADMQAASDALEFEEAALLRDQLQAVERT.

The protein belongs to the UvrC family. Interacts with UvrB in an incision complex.

The protein localises to the cytoplasm. The UvrABC repair system catalyzes the recognition and processing of DNA lesions. UvrC both incises the 5' and 3' sides of the lesion. The N-terminal half is responsible for the 3' incision and the C-terminal half is responsible for the 5' incision. This is UvrABC system protein C from Oleidesulfovibrio alaskensis (strain ATCC BAA-1058 / DSM 17464 / G20) (Desulfovibrio alaskensis).